A 286-amino-acid polypeptide reads, in one-letter code: Mitochondrial dicarboxylate carrier (286 aa).

Solcar repeat units follow at residues 7–87 (SRWY…MRDY), 100–187 (SKVL…AKQL), and 196–279 (DNIF…LRKH). Helical transmembrane passes span 9–29 (WYFGGLASCGAACCTHPLDLL), 62–81 (GLSASLCRQMTYSLTRFAIY), and 102–122 (VLLGGISGLTGGFVGTPADLV). Lys158 is modified (N6-acetyllysine). Helical transmembrane passes span 162–181 (GATMASSRGALVTVGQLSCY), 202–222 (FLSSFIAGGCATFLCQPLDVL), and 254–274 (GLVPAGVRLVPHTVLTFMFLE).

The protein belongs to the mitochondrial carrier (TC 2.A.29) family. As to expression, expressed most strongly in liver, then kidney, and at lower levels in heart and brain.

The protein localises to the mitochondrion inner membrane. The catalysed reaction is (S)-malate(in) + phosphate(out) = (S)-malate(out) + phosphate(in). It catalyses the reaction malonate(out) + (S)-malate(in) = malonate(in) + (S)-malate(out). The enzyme catalyses (S)-malate(in) + succinate(out) = (S)-malate(out) + succinate(in). It carries out the reaction (S)-malate(in) + sulfate(out) = (S)-malate(out) + sulfate(in). The catalysed reaction is malonate(out) + phosphate(in) = malonate(in) + phosphate(out). It catalyses the reaction succinate(out) + phosphate(in) = succinate(in) + phosphate(out). The enzyme catalyses sulfate(out) + phosphate(in) = sulfate(in) + phosphate(out). It carries out the reaction malonate(out) + succinate(in) = malonate(in) + succinate(out). In terms of biological role, catalyzes the electroneutral exchange or flux of physiologically important metabolites such as dicarboxylates (malonate, malate, succinate), inorganic sulfur-containing anions, and phosphate, across mitochondrial inner membrane. Plays an important role in gluconeogenesis, fatty acid metabolism, urea synthesis, and sulfur metabolism, particularly in liver, by supplying the substrates for the different metabolic processes. Regulates fatty acid release from adipocytes, and contributes to systemic insulin sensitivity. The protein is Mitochondrial dicarboxylate carrier of Rattus norvegicus (Rat).